Reading from the N-terminus, the 257-residue chain is Pimeloyl-[acyl-carrier protein] methyl ester esterase (257 aa).

The AB hydrolase-1 domain occupies 16 to 240 (LVLIHGWGMN…EQASHAPFIS (225 aa)). Residues W22, 82 to 83 (SL), and 143 to 147 (FMALQ) each bind substrate. The active-site Nucleophile is S82. Active-site residues include D207 and H235. Position 235 (H235) interacts with substrate.

Belongs to the AB hydrolase superfamily. Carboxylesterase BioH family. Monomer.

It is found in the cytoplasm. It carries out the reaction 6-carboxyhexanoyl-[ACP] methyl ester + H2O = 6-carboxyhexanoyl-[ACP] + methanol + H(+). It functions in the pathway cofactor biosynthesis; biotin biosynthesis. The physiological role of BioH is to remove the methyl group introduced by BioC when the pimeloyl moiety is complete. It allows to synthesize pimeloyl-ACP via the fatty acid synthetic pathway through the hydrolysis of the ester bonds of pimeloyl-ACP esters. This is Pimeloyl-[acyl-carrier protein] methyl ester esterase from Aliivibrio fischeri (strain ATCC 700601 / ES114) (Vibrio fischeri).